The following is a 260-amino-acid chain: Indole-3-glycerol phosphate synthase (260 aa).

Belongs to the TrpC family.

The enzyme catalyses 1-(2-carboxyphenylamino)-1-deoxy-D-ribulose 5-phosphate + H(+) = (1S,2R)-1-C-(indol-3-yl)glycerol 3-phosphate + CO2 + H2O. It participates in amino-acid biosynthesis; L-tryptophan biosynthesis; L-tryptophan from chorismate: step 4/5. This is Indole-3-glycerol phosphate synthase from Staphylococcus aureus (strain bovine RF122 / ET3-1).